Here is a 346-residue protein sequence, read N- to C-terminus: S-adenosylmethionine:tRNA ribosyltransferase-isomerase (346 aa).

It belongs to the QueA family. As to quaternary structure, monomer.

The protein resides in the cytoplasm. It catalyses the reaction 7-aminomethyl-7-carbaguanosine(34) in tRNA + S-adenosyl-L-methionine = epoxyqueuosine(34) in tRNA + adenine + L-methionine + 2 H(+). The protein operates within tRNA modification; tRNA-queuosine biosynthesis. Its function is as follows. Transfers and isomerizes the ribose moiety from AdoMet to the 7-aminomethyl group of 7-deazaguanine (preQ1-tRNA) to give epoxyqueuosine (oQ-tRNA). The sequence is that of S-adenosylmethionine:tRNA ribosyltransferase-isomerase from Lysinibacillus sphaericus (strain C3-41).